The chain runs to 714 residues: Interferon-induced GTP-binding protein Mx2 (714 aa).

The segment at Met-1 to Leu-89 is disordered. Polar residues-rich tracts occupy residues Asn-61–Pro-70 and Gln-79–Asn-88. The Dynamin-type G domain occupies Asp-115–Pro-386. The tract at residues Gly-125–Ser-132 is G1 motif. Position 125–132 (Gly-125–Ser-132) interacts with GTP. The interval Ile-150–Arg-152 is G2 motif. Positions Asp-224–Gly-227 are G3 motif. GTP contacts are provided by residues Asp-224–Ile-228 and Thr-293–Asp-296. The segment at Thr-293–Asp-296 is G4 motif. The tract at residues Lys-325 to Gly-328 is G5 motif. The GED domain occupies Ile-622–Ser-713.

This sequence belongs to the TRAFAC class dynamin-like GTPase superfamily. Dynamin/Fzo/YdjA family.

Its subcellular location is the cytoplasm. It localises to the nucleus. Functionally, interferon-induced dynamin-like GTPase with antiviral activity. The polypeptide is Interferon-induced GTP-binding protein Mx2 (MX2) (Ovis aries (Sheep)).